The primary structure comprises 518 residues: ESX-3 secretion system ATPase EccB3 (518 aa).

Positions 1–26 are disordered; sequence MTGPVNPDDRRSFSSRTPVNENPDGV. Residues 71–91 traverse the membrane as a helical segment; the sequence is VLTGALILVTGLVGCFIFSLF.

Belongs to the EccB family. In terms of assembly, part of the ESX-3 / type VII secretion system (T7SS), which is composed of cytosolic and membrane components. The ESX-3 membrane complex is composed of EccB3, EccC3, EccD3 and EccE3.

It is found in the cell inner membrane. Its function is as follows. An ATPase. Part of the ESX-3 specialized secretion system, which is required for siderophore-mediated iron acquisition and for the secretion of EsxH and EsxG. This Mycolicibacterium smegmatis (strain ATCC 700084 / mc(2)155) (Mycobacterium smegmatis) protein is ESX-3 secretion system ATPase EccB3.